The primary structure comprises 251 residues: MNLNSIPAFQDNYIWVLSNNEGRCLIVDPGEAAPVLNAIKEKNWQPEAIFLTHHHHDHVGGVKELLQHFPHVVVYGPAETQDKGTTRVVKDGDSALVLGHEFSIFATPGHTLGHICYFSHPYLFCGDTLFSGGCGRLFEGTASQMYQSLKKISALPDDTLICCAHEYTLANMKFALSILPHDSFINEYYRKVNELRAKNQITLPVILKNERKNNIFLRTEDPDLINEINKETKLQQPEERFAWLRSKKDSF.

Zn(2+) contacts are provided by H53, H55, D57, H58, H110, D127, and H165.

The protein belongs to the metallo-beta-lactamase superfamily. Glyoxalase II family. As to quaternary structure, monomer. Zn(2+) serves as cofactor.

The catalysed reaction is an S-(2-hydroxyacyl)glutathione + H2O = a 2-hydroxy carboxylate + glutathione + H(+). It functions in the pathway secondary metabolite metabolism; methylglyoxal degradation; (R)-lactate from methylglyoxal: step 2/2. Thiolesterase that catalyzes the hydrolysis of S-D-lactoyl-glutathione to form glutathione and D-lactic acid. This is Hydroxyacylglutathione hydrolase from Citrobacter koseri (strain ATCC BAA-895 / CDC 4225-83 / SGSC4696).